A 506-amino-acid polypeptide reads, in one-letter code: Pisatin demethylase (506 aa).

Heme is bound at residue Cys453.

It belongs to the cytochrome P450 family. The cofactor is heme.

Can detoxify the phytoalexin pisatin from garden pea. Pisatin is an antimicrobial compound produced by pea in response to infection by plant pathogens. This chain is Pisatin demethylase (PDA6-1), found in Fusarium vanettenii (Neocosmospora pisi).